The following is a 451-amino-acid chain: Methylenetetrahydrofolate--tRNA-(uracil-5-)-methyltransferase TrmFO (451 aa).

FAD is bound at residue 18-23; sequence GGGLAG.

This sequence belongs to the MnmG family. TrmFO subfamily. It depends on FAD as a cofactor.

Its subcellular location is the cytoplasm. The enzyme catalyses uridine(54) in tRNA + (6R)-5,10-methylene-5,6,7,8-tetrahydrofolate + NADH + H(+) = 5-methyluridine(54) in tRNA + (6S)-5,6,7,8-tetrahydrofolate + NAD(+). It catalyses the reaction uridine(54) in tRNA + (6R)-5,10-methylene-5,6,7,8-tetrahydrofolate + NADPH + H(+) = 5-methyluridine(54) in tRNA + (6S)-5,6,7,8-tetrahydrofolate + NADP(+). Functionally, catalyzes the folate-dependent formation of 5-methyl-uridine at position 54 (M-5-U54) in all tRNAs. This is Methylenetetrahydrofolate--tRNA-(uracil-5-)-methyltransferase TrmFO from Synechococcus sp. (strain JA-3-3Ab) (Cyanobacteria bacterium Yellowstone A-Prime).